The chain runs to 293 residues: Release factor glutamine methyltransferase (293 aa).

S-adenosyl-L-methionine-binding positions include 130–134, aspartate 153, tryptophan 182, and asparagine 199; that span reads GTGSG. 199–202 contributes to the substrate binding site; the sequence is NPPY.

Belongs to the protein N5-glutamine methyltransferase family. PrmC subfamily.

It catalyses the reaction L-glutaminyl-[peptide chain release factor] + S-adenosyl-L-methionine = N(5)-methyl-L-glutaminyl-[peptide chain release factor] + S-adenosyl-L-homocysteine + H(+). Functionally, methylates the class 1 translation termination release factors RF1/PrfA and RF2/PrfB on the glutamine residue of the universally conserved GGQ motif. The chain is Release factor glutamine methyltransferase from Prochlorococcus marinus (strain SARG / CCMP1375 / SS120).